A 357-amino-acid chain; its full sequence is UDP-N-acetylglucosamine--N-acetylmuramyl-(pentapeptide) pyrophosphoryl-undecaprenol N-acetylglucosamine transferase (357 aa).

Residues Thr-15 to Gly-17, Asn-124, Arg-165, Ser-194, and Gln-288 contribute to the UDP-N-acetyl-alpha-D-glucosamine site.

This sequence belongs to the glycosyltransferase 28 family. MurG subfamily.

The protein localises to the cell inner membrane. The catalysed reaction is di-trans,octa-cis-undecaprenyl diphospho-N-acetyl-alpha-D-muramoyl-L-alanyl-D-glutamyl-meso-2,6-diaminopimeloyl-D-alanyl-D-alanine + UDP-N-acetyl-alpha-D-glucosamine = di-trans,octa-cis-undecaprenyl diphospho-[N-acetyl-alpha-D-glucosaminyl-(1-&gt;4)]-N-acetyl-alpha-D-muramoyl-L-alanyl-D-glutamyl-meso-2,6-diaminopimeloyl-D-alanyl-D-alanine + UDP + H(+). It functions in the pathway cell wall biogenesis; peptidoglycan biosynthesis. Functionally, cell wall formation. Catalyzes the transfer of a GlcNAc subunit on undecaprenyl-pyrophosphoryl-MurNAc-pentapeptide (lipid intermediate I) to form undecaprenyl-pyrophosphoryl-MurNAc-(pentapeptide)GlcNAc (lipid intermediate II). In Nostoc sp. (strain PCC 7120 / SAG 25.82 / UTEX 2576), this protein is UDP-N-acetylglucosamine--N-acetylmuramyl-(pentapeptide) pyrophosphoryl-undecaprenol N-acetylglucosamine transferase.